Here is a 175-residue protein sequence, read N- to C-terminus: NADH-ubiquinone oxidoreductase chain 6 (175 aa).

Helical transmembrane passes span 1-21 (MMTYVVFILSIVFVIGLIGSP), 25-45 (SPIYGGLGLIVSGGAGCGMVL), 47-67 (FGGSFLGLMVFLVYLGGMLVV), 88-108 (VVLGAFLLGLMMEFLAVLYVL), 115-137 (LVFKFSGLGDWVVYGMSDFGVFS), and 149-169 (YGVWLVVVTGWSLFVGVVVIM).

The protein belongs to the complex I subunit 6 family. Core subunit of respiratory chain NADH dehydrogenase (Complex I) which is composed of 45 different subunits.

The protein resides in the mitochondrion inner membrane. The enzyme catalyses a ubiquinone + NADH + 5 H(+)(in) = a ubiquinol + NAD(+) + 4 H(+)(out). In terms of biological role, core subunit of the mitochondrial membrane respiratory chain NADH dehydrogenase (Complex I) which catalyzes electron transfer from NADH through the respiratory chain, using ubiquinone as an electron acceptor. Essential for the catalytic activity and assembly of complex I. This is NADH-ubiquinone oxidoreductase chain 6 (MT-ND6) from Hippopotamus amphibius (Hippopotamus).